The primary structure comprises 177 residues: Inorganic pyrophosphatase (177 aa).

Substrate contacts are provided by K31, R45, and Y57. Mg(2+) contacts are provided by D67, D72, and D104. Residue Y142 participates in substrate binding.

Belongs to the PPase family. In terms of assembly, homohexamer. Mg(2+) is required as a cofactor.

Its subcellular location is the cytoplasm. The catalysed reaction is diphosphate + H2O = 2 phosphate + H(+). Catalyzes the hydrolysis of inorganic pyrophosphate (PPi) forming two phosphate ions. This chain is Inorganic pyrophosphatase, found in Neisseria meningitidis serogroup B (strain ATCC BAA-335 / MC58).